The chain runs to 89 residues: Small ribosomal subunit protein uS15 (89 aa).

This sequence belongs to the universal ribosomal protein uS15 family. Part of the 30S ribosomal subunit. Forms a bridge to the 50S subunit in the 70S ribosome, contacting the 23S rRNA.

Functionally, one of the primary rRNA binding proteins, it binds directly to 16S rRNA where it helps nucleate assembly of the platform of the 30S subunit by binding and bridging several RNA helices of the 16S rRNA. In terms of biological role, forms an intersubunit bridge (bridge B4) with the 23S rRNA of the 50S subunit in the ribosome. In Nitrosomonas eutropha (strain DSM 101675 / C91 / Nm57), this protein is Small ribosomal subunit protein uS15.